The sequence spans 621 residues: Chaperone protein DnaK (621 aa).

Residue Thr179 is modified to Phosphothreonine; by autocatalysis. Residues 583-605 show a composition bias toward polar residues; the sequence is SQVQDTQGAAQGQSQGNPQQTAD. Residues 583 to 621 are disordered; the sequence is SQVQDTQGAAQGQSQGNPQQTADNRGKVVDAEIVDENKE. A compositionally biased stretch (basic and acidic residues) spans 606 to 621; that stretch reads NRGKVVDAEIVDENKE.

The protein belongs to the heat shock protein 70 family.

Its function is as follows. Acts as a chaperone. The sequence is that of Chaperone protein DnaK from Endomicrobium trichonymphae.